The sequence spans 405 residues: GTPase Obg (405 aa).

Residues 1–159 (MKFVDEVSIF…RDLKLELKVL (159 aa)) enclose the Obg domain. Positions 127–148 (NTRFKSSTNRAPRQTTPGKPGE) are disordered. Residues 129 to 143 (RFKSSTNRAPRQTTP) are compositionally biased toward polar residues. The OBG-type G domain maps to 160–333 (ADVGLLGLPN…LCQDIMHYLD (174 aa)). GTP contacts are provided by residues 166 to 173 (GLPNAGKS), 191 to 195 (FTTLV), 213 to 216 (DIPG), 283 to 286 (NKAD), and 314 to 316 (SAL). Mg(2+) is bound by residues serine 173 and threonine 193. The segment covering 383–398 (ALEDEDDFDDEDDGDG) has biased composition (acidic residues). The segment at 383-405 (ALEDEDDFDDEDDGDGPEIFYVR) is disordered.

Belongs to the TRAFAC class OBG-HflX-like GTPase superfamily. OBG GTPase family. As to quaternary structure, monomer. Mg(2+) is required as a cofactor.

Its subcellular location is the cytoplasm. In terms of biological role, an essential GTPase which binds GTP, GDP and possibly (p)ppGpp with moderate affinity, with high nucleotide exchange rates and a fairly low GTP hydrolysis rate. Plays a role in control of the cell cycle, stress response, ribosome biogenesis and in those bacteria that undergo differentiation, in morphogenesis control. This Azotobacter vinelandii (strain DJ / ATCC BAA-1303) protein is GTPase Obg.